The chain runs to 325 residues: NADH-quinone oxidoreductase subunit H (325 aa).

8 consecutive transmembrane segments (helical) span residues 11–31 (ILLSILKAVVILLVVVTCGAF), 81–101 (VIFTLAPMIAFTSLLLAFAIV), 114–134 (IGILFFLMMAGLAVYAVLFAG), 154–174 (LSYEVFLGLSLMGVVAQAGSF), 186–206 (IWNVIPQFFGFVTFAIAGVAV), 237–257 (FFVGEYIGIVTISALMVTLFF), 265–285 (LPPFIWFALKTAFFMMMFILI), and 304–324 (VCLPLTLVNLLVTAAVILWQA).

It belongs to the complex I subunit 1 family. NDH-1 is composed of 13 different subunits. Subunits NuoA, H, J, K, L, M, N constitute the membrane sector of the complex.

Its subcellular location is the cell inner membrane. It carries out the reaction a quinone + NADH + 5 H(+)(in) = a quinol + NAD(+) + 4 H(+)(out). Functionally, NDH-1 shuttles electrons from NADH, via FMN and iron-sulfur (Fe-S) centers, to quinones in the respiratory chain. The immediate electron acceptor for the enzyme in this species is believed to be ubiquinone. Couples the redox reaction to proton translocation (for every two electrons transferred, four hydrogen ions are translocated across the cytoplasmic membrane), and thus conserves the redox energy in a proton gradient. This subunit may bind ubiquinone. The chain is NADH-quinone oxidoreductase subunit H from Enterobacter sp. (strain 638).